A 535-amino-acid chain; its full sequence is CTP synthase (535 aa).

Residues 1 to 267 (MTKYIFVTGG…DKLVCEHMKL (267 aa)) form an amidoligase domain region. CTP is bound at residue S13. Position 13 (S13) interacts with UTP. 14–19 (SLGKGI) contacts ATP. L-glutamine is bound at residue Y54. D71 is an ATP binding site. D71 and E141 together coordinate Mg(2+). Residues 148 to 150 (DIE), 188 to 193 (KTKPTQ), and K224 each bind CTP. UTP is bound by residues 188-193 (KTKPTQ) and K224. Positions 292–534 (TIGLVGKYVE…VGASLQASES (243 aa)) constitute a Glutamine amidotransferase type-1 domain. G354 is a binding site for L-glutamine. C381 acts as the Nucleophile; for glutamine hydrolysis in catalysis. Residues 382 to 385 (LGMQ), E405, and R462 contribute to the L-glutamine site. Active-site residues include H507 and E509.

Belongs to the CTP synthase family. In terms of assembly, homotetramer.

The catalysed reaction is UTP + L-glutamine + ATP + H2O = CTP + L-glutamate + ADP + phosphate + 2 H(+). The enzyme catalyses L-glutamine + H2O = L-glutamate + NH4(+). It catalyses the reaction UTP + NH4(+) + ATP = CTP + ADP + phosphate + 2 H(+). The protein operates within pyrimidine metabolism; CTP biosynthesis via de novo pathway; CTP from UDP: step 2/2. With respect to regulation, allosterically activated by GTP, when glutamine is the substrate; GTP has no effect on the reaction when ammonia is the substrate. The allosteric effector GTP functions by stabilizing the protein conformation that binds the tetrahedral intermediate(s) formed during glutamine hydrolysis. Inhibited by the product CTP, via allosteric rather than competitive inhibition. In terms of biological role, catalyzes the ATP-dependent amination of UTP to CTP with either L-glutamine or ammonia as the source of nitrogen. Regulates intracellular CTP levels through interactions with the four ribonucleotide triphosphates. The sequence is that of CTP synthase from Bacillus pumilus (strain SAFR-032).